The following is a 304-amino-acid chain: Non-specific ribonucleoside hydrolase RihC (304 aa).

His233 is an active-site residue.

The protein belongs to the IUNH family. RihC subfamily.

Functionally, hydrolyzes both purine and pyrimidine ribonucleosides with a broad-substrate specificity. The chain is Non-specific ribonucleoside hydrolase RihC from Shigella boydii serotype 4 (strain Sb227).